The following is a 336-amino-acid chain: tRNA-modifying protein YgfZ (336 aa).

Residues Trp28 and Trp191 each contribute to the folate site.

It belongs to the tRNA-modifying YgfZ family.

It localises to the cytoplasm. In terms of biological role, folate-binding protein involved in regulating the level of ATP-DnaA and in the modification of some tRNAs. It is probably a key factor in regulatory networks that act via tRNA modification, such as initiation of chromosomal replication. This chain is tRNA-modifying protein YgfZ, found in Hamiltonella defensa subsp. Acyrthosiphon pisum (strain 5AT).